A 434-amino-acid polypeptide reads, in one-letter code: Serine hydroxymethyltransferase (434 aa).

(6S)-5,6,7,8-tetrahydrofolate-binding positions include Leu-133 and 137–139; that span reads GHL. Lys-242 bears the N6-(pyridoxal phosphate)lysine mark.

This sequence belongs to the SHMT family. Homodimer. Pyridoxal 5'-phosphate is required as a cofactor.

It is found in the cytoplasm. It catalyses the reaction (6R)-5,10-methylene-5,6,7,8-tetrahydrofolate + glycine + H2O = (6S)-5,6,7,8-tetrahydrofolate + L-serine. It functions in the pathway one-carbon metabolism; tetrahydrofolate interconversion. Its pathway is amino-acid biosynthesis; glycine biosynthesis; glycine from L-serine: step 1/1. Functionally, catalyzes the reversible interconversion of serine and glycine with tetrahydrofolate (THF) serving as the one-carbon carrier. This reaction serves as the major source of one-carbon groups required for the biosynthesis of purines, thymidylate, methionine, and other important biomolecules. Also exhibits THF-independent aldolase activity toward beta-hydroxyamino acids, producing glycine and aldehydes, via a retro-aldol mechanism. The polypeptide is Serine hydroxymethyltransferase (Caulobacter sp. (strain K31)).